A 496-amino-acid polypeptide reads, in one-letter code: Probable cytosol aminopeptidase (496 aa).

2 residues coordinate Mn(2+): Lys258 and Asp263. Residue Lys270 is part of the active site. Asp281, Asp340, and Glu342 together coordinate Mn(2+). Arg344 is an active-site residue.

It belongs to the peptidase M17 family. It depends on Mn(2+) as a cofactor.

Its subcellular location is the cytoplasm. The catalysed reaction is Release of an N-terminal amino acid, Xaa-|-Yaa-, in which Xaa is preferably Leu, but may be other amino acids including Pro although not Arg or Lys, and Yaa may be Pro. Amino acid amides and methyl esters are also readily hydrolyzed, but rates on arylamides are exceedingly low.. The enzyme catalyses Release of an N-terminal amino acid, preferentially leucine, but not glutamic or aspartic acids.. Presumably involved in the processing and regular turnover of intracellular proteins. Catalyzes the removal of unsubstituted N-terminal amino acids from various peptides. The sequence is that of Probable cytosol aminopeptidase from Helicobacter pylori (strain G27).